The primary structure comprises 255 residues: Thiazole synthase (255 aa).

Lysine 95 (schiff-base intermediate with DXP) is an active-site residue. 1-deoxy-D-xylulose 5-phosphate contacts are provided by residues glycine 156, 182–183 (AG), and 204–205 (NT).

It belongs to the ThiG family. Homotetramer. Forms heterodimers with either ThiH or ThiS.

It localises to the cytoplasm. It catalyses the reaction [ThiS sulfur-carrier protein]-C-terminal-Gly-aminoethanethioate + 2-iminoacetate + 1-deoxy-D-xylulose 5-phosphate = [ThiS sulfur-carrier protein]-C-terminal Gly-Gly + 2-[(2R,5Z)-2-carboxy-4-methylthiazol-5(2H)-ylidene]ethyl phosphate + 2 H2O + H(+). It functions in the pathway cofactor biosynthesis; thiamine diphosphate biosynthesis. Its function is as follows. Catalyzes the rearrangement of 1-deoxy-D-xylulose 5-phosphate (DXP) to produce the thiazole phosphate moiety of thiamine. Sulfur is provided by the thiocarboxylate moiety of the carrier protein ThiS. In vitro, sulfur can be provided by H(2)S. The protein is Thiazole synthase of Vibrio parahaemolyticus serotype O3:K6 (strain RIMD 2210633).